We begin with the raw amino-acid sequence, 185 residues long: MGRYSVEPDNATKSCKARGSNLRVHFKNTRETAQAIKRMSLRRAQRYLKNVIAKKEIVPFRRFNGGVGRKAQAKAWGCTQGRWPKKSAEFLWQLLRNAESNADYKGLDVDRLVIDHIQVNRAPKMRRRTYRAHGRINPYMSSPCHVEVILSEKEQVVAAPTPDEDAPKKKQSKKKMARQKLMQRD.

The tract at residues 157–185 is disordered; the sequence is VAAPTPDEDAPKKKQSKKKMARQKLMQRD. Residues 169 to 178 show a composition bias toward basic residues; that stretch reads KKQSKKKMAR.

This sequence belongs to the universal ribosomal protein uL22 family.

In Argas monolakensis (Mono lake bird tick), this protein is Large ribosomal subunit protein uL22 (RpL17).